The chain runs to 443 residues: ATP-dependent protease ATPase subunit HslU (443 aa).

ATP-binding positions include I20, 62 to 67 (GVGKTE), D255, E321, and R393.

This sequence belongs to the ClpX chaperone family. HslU subfamily. As to quaternary structure, a double ring-shaped homohexamer of HslV is capped on each side by a ring-shaped HslU homohexamer. The assembly of the HslU/HslV complex is dependent on binding of ATP.

The protein localises to the cytoplasm. ATPase subunit of a proteasome-like degradation complex; this subunit has chaperone activity. The binding of ATP and its subsequent hydrolysis by HslU are essential for unfolding of protein substrates subsequently hydrolyzed by HslV. HslU recognizes the N-terminal part of its protein substrates and unfolds these before they are guided to HslV for hydrolysis. The polypeptide is ATP-dependent protease ATPase subunit HslU (Helicobacter pylori (strain Shi470)).